Consider the following 201-residue polypeptide: dTTP/UTP pyrophosphatase (201 aa).

Catalysis depends on D75, which acts as the Proton acceptor.

This sequence belongs to the Maf family. YhdE subfamily. A divalent metal cation serves as cofactor.

Its subcellular location is the cytoplasm. The catalysed reaction is dTTP + H2O = dTMP + diphosphate + H(+). It catalyses the reaction UTP + H2O = UMP + diphosphate + H(+). Nucleoside triphosphate pyrophosphatase that hydrolyzes dTTP and UTP. May have a dual role in cell division arrest and in preventing the incorporation of modified nucleotides into cellular nucleic acids. The sequence is that of dTTP/UTP pyrophosphatase from Pseudomonas fluorescens (strain ATCC BAA-477 / NRRL B-23932 / Pf-5).